A 196-amino-acid chain; its full sequence is Adenylate kinase (196 aa).

9 to 17 (GIPGVGKST) contributes to the ATP binding site.

Belongs to the archaeal adenylate kinase family.

Its subcellular location is the cytoplasm. It catalyses the reaction AMP + ATP = 2 ADP. The protein is Adenylate kinase (adkA) of Pyrococcus horikoshii (strain ATCC 700860 / DSM 12428 / JCM 9974 / NBRC 100139 / OT-3).